The chain runs to 480 residues: Glutamate--tRNA ligase (480 aa).

Positions 21–31 (PSPTGYLHVGG) match the 'HIGH' region motif. Residues cysteine 110, cysteine 112, cysteine 137, and histidine 139 each coordinate Zn(2+). The 'KMSKS' region signature appears at 248 to 252 (KLSKR). Residue lysine 251 coordinates ATP.

Belongs to the class-I aminoacyl-tRNA synthetase family. Glutamate--tRNA ligase type 1 subfamily. In terms of assembly, monomer. Zn(2+) is required as a cofactor.

The protein localises to the cytoplasm. It carries out the reaction tRNA(Glu) + L-glutamate + ATP = L-glutamyl-tRNA(Glu) + AMP + diphosphate. Functionally, catalyzes the attachment of glutamate to tRNA(Glu) in a two-step reaction: glutamate is first activated by ATP to form Glu-AMP and then transferred to the acceptor end of tRNA(Glu). The sequence is that of Glutamate--tRNA ligase from Histophilus somni (strain 2336) (Haemophilus somnus).